Consider the following 417-residue polypeptide: MAAETATSKQNLVILGGSYAGLSTAHYLLRHVVPQLPGKESYQVILISASSEAMCRPACPRALISDDMFQQDKLFVSIPAQFEQYLKDTFKFIHGTVTSLDHQDRCVTVSVKDGDPEKIKCHAIVIATGASTASPLLGLNRDSETLRTNWNEFRAALPTAKHIVIAGGGPAGVETAGELGEYLNGRAGWFHSKLENPKVEITLVTADSKILPILRPALATKAEKLLNKVGVTVIKKSRVTNVTPPGAGAEDALTANATVTLEDGKELQADLYIPATGMTYNSSFVDASLLTDYGRVETDPGTLRVVNGGALLYAIGDVGSHARPAVHNILNTVPILCANMKRDLLLAVQPDASVGEDRQFKEDTRETQLVPVGRSKGVGAFMGFRQPGFMVWLIKGRDYWLWTTEGLWSGKHWAKGS.

6-hydroxy-FAD-binding positions include 16-20, arginine 61, and aspartate 317; that span reads GGSYA.

Belongs to the FAD-dependent oxidoreductase family. 6-hydroxy-FAD serves as cofactor.

The catalysed reaction is deoxyherqueinone + NADPH + O2 + H(+) = herqueinone + NADP(+) + H2O. It participates in secondary metabolite biosynthesis. Oxidoreductase; part of the gene cluster that mediates the biosynthesis of phenalenones such as herqueinone, compounds that have been reported to treat tumors, bacterial infections and/or mycoses, and rheumatic diseases. The non-reducing polyketide synthase phnA synthesizes the heptaketide backbone and cyclizes it into the angular, hemiketal-containing naphtho-gamma-pyrone prephenalenone. The product template (PT) domain of phnA catalyzes only the C4-C9 aldol condensation, which is unprecedented among known PT domains. The transformation of prephenalenone to phenalenones requires an FAD-dependent monooxygenase phnB, which catalyzes the C2 aromatic hydroxylation of prephenalenone and ring opening of the gamma-pyrone ring simultaneously. Subsequent intramolecular deprotonation of C3 phenolic oxygen accelerates phenalenone ring closure to yield the tricyclic phenalenone core with a C2 hydroxylation. The prenyltransferase phnF further catalyzes reverse C-prenylation of phenalenone by direct electrophilic substitution at C6, or possibly via first a forward O-prenylation of a neighboring phenol in phenalenone, followed by a Claisen rearrangement. The hydroalkoxylation enzyme phnH catalyzes the 5-exo-trig cyclization via acid catalysis after the spontaneous deprotonation of 7-OH, which leads to the formation of the dihydrobenzofuran atrovenetin. Atrovenetin is further converted to deoxyherqueinone by the O-methyltransferase phnC which can methylate C2-OH to stabilize the northern portion of the phenalenone core. Finally, the oxidoreductase phnG converts deoxyherqueinone to herqueinone via C6 hydroxylation. This Penicillium herquei protein is Oxidoreductase phnG.